Here is a 108-residue protein sequence, read N- to C-terminus: Nucleoid-associated protein Pmen_2646 (108 aa).

The tract at residues 1–25 (MMKGGMAGLMKQAQQMQEKMQKMQE) is disordered.

Belongs to the YbaB/EbfC family. Homodimer.

Its subcellular location is the cytoplasm. The protein resides in the nucleoid. Functionally, binds to DNA and alters its conformation. May be involved in regulation of gene expression, nucleoid organization and DNA protection. In Ectopseudomonas mendocina (strain ymp) (Pseudomonas mendocina), this protein is Nucleoid-associated protein Pmen_2646.